A 547-amino-acid polypeptide reads, in one-letter code: Chaperonin GroEL (547 aa).

ATP contacts are provided by residues 30–33, Lys51, 87–91, Gly415, 479–481, and Asp495; these read TLGP, DGTTT, and NAA. The segment at 526–547 is disordered; sequence KEEKSDLSVPPQGGMGGMGGMM. Positions 538–547 are enriched in gly residues; it reads GGMGGMGGMM.

It belongs to the chaperonin (HSP60) family. Forms a cylinder of 14 subunits composed of two heptameric rings stacked back-to-back. Interacts with the co-chaperonin GroES.

Its subcellular location is the cytoplasm. The catalysed reaction is ATP + H2O + a folded polypeptide = ADP + phosphate + an unfolded polypeptide.. Together with its co-chaperonin GroES, plays an essential role in assisting protein folding. The GroEL-GroES system forms a nano-cage that allows encapsulation of the non-native substrate proteins and provides a physical environment optimized to promote and accelerate protein folding. The polypeptide is Chaperonin GroEL (Buchnera aphidicola subsp. Tetraneura caerulescens).